A 1107-amino-acid polypeptide reads, in one-letter code: Polyphosphatidylinositol phosphatase INP53 (1107 aa).

The SAC domain maps to 142-482 (LKKLLSNGSF…GDQISQIYTG (341 aa)). Ser497 is subject to Phosphoserine. The segment at 926-1107 (TASSVASSSP…LDSWQPLTPK (182 aa)) is disordered. Residues 927–942 (ASSVASSSPVSSASAS) are compositionally biased toward low complexity. Residues 943–956 (LQPVRTQNSSQSRT) are compositionally biased toward polar residues. At Ser986 the chain carries Phosphoserine. 4 stretches are compositionally biased toward polar residues: residues 987-1005 (PTPQ…NIQE), 1020-1038 (FSQN…SPMS), 1045-1063 (NSAS…QTPT), and 1097-1107 (TLDSWQPLTPK). Ser1035 bears the Phosphoserine mark. Thr1105 carries the phosphothreonine modification.

The protein belongs to the synaptojanin family. In the central section; belongs to the inositol 1,4,5-trisphosphate 5-phosphatase family. As to quaternary structure, interacts (via SAC domain) with BSP1; the interaction is direct. Interacts with CHC1.

Its subcellular location is the cytoplasm. The catalysed reaction is a 1,2-diacyl-sn-glycero-3-phospho-(1D-myo-inositol-4,5-bisphosphate) + H2O = a 1,2-diacyl-sn-glycero-3-phospho-(1D-myo-inositol 4-phosphate) + phosphate. In terms of biological role, dephosphorylates a number of phosphatidylinositols (PIs) like phosphatidylinositol 4,5-bisphosphate (PtdIns(4,5)P2), but also phosphatidylinositol 3-phosphate (PtdIns(3)P), phosphatidylinositol 4-phosphate (PtdIns(4)P), and phosphatidylinositol 3,5-bisphosphate (PtdIns(3,5)P2). Controls the cellular levels and subcellular distribution of phosphatidylinositol 3-phosphate and phosphatidylinositol 4,5-bisphosphate. Plays an essential role in a TGN (trans Golgi network)-to-early endosome pathway. Involved in clathrin-mediated protein sorting at the TGN. The polypeptide is Polyphosphatidylinositol phosphatase INP53 (INP53) (Saccharomyces cerevisiae (strain ATCC 204508 / S288c) (Baker's yeast)).